Here is a 127-residue protein sequence, read N- to C-terminus: MARIAGVDLPRDKRVEIALTYLYGIGLSRSHEILDATGVSPDVRVKDLSDEDALKLRTYIDENYEIEGDLRRWEAMNIKRLGDIGTYRGRRHRQGLPVRGQRTRTNARTRRGRRLTVAGKKKTPAKK.

The segment at 90-127 (RRHRQGLPVRGQRTRTNARTRRGRRLTVAGKKKTPAKK) is disordered. Residues 101-127 (QRTRTNARTRRGRRLTVAGKKKTPAKK) are compositionally biased toward basic residues.

This sequence belongs to the universal ribosomal protein uS13 family. In terms of assembly, part of the 30S ribosomal subunit. Forms a loose heterodimer with protein S19. Forms two bridges to the 50S subunit in the 70S ribosome.

Functionally, located at the top of the head of the 30S subunit, it contacts several helices of the 16S rRNA. In the 70S ribosome it contacts the 23S rRNA (bridge B1a) and protein L5 of the 50S subunit (bridge B1b), connecting the 2 subunits; these bridges are implicated in subunit movement. Contacts the tRNAs in the A and P-sites. This is Small ribosomal subunit protein uS13 from Synechocystis sp. (strain ATCC 27184 / PCC 6803 / Kazusa).